Here is a 710-residue protein sequence, read N- to C-terminus: Aminopeptidase P2 (710 aa).

Residues 1–79 (MIPLTLSSPS…IRKAQTKVVV (79 aa)) constitute a chloroplast transit peptide. Arg147 and His486 together coordinate a peptide. Mn(2+) contacts are provided by Asp506, Asp517, and His580. 3 residues coordinate a peptide: His580, His589, and Glu614. Residues Glu614 and Glu628 each coordinate Mn(2+).

It belongs to the peptidase M24B family. In terms of assembly, homodimer. Mn(2+) serves as cofactor.

It is found in the plastid. The protein localises to the chloroplast. It carries out the reaction Release of any N-terminal amino acid, including proline, that is linked to proline, even from a dipeptide or tripeptide.. Functionally, catalyzes the removal of a penultimate prolyl residue from the N-termini of peptides, such as Arg-Pro-Pro. This is Aminopeptidase P2 from Arabidopsis thaliana (Mouse-ear cress).